Reading from the N-terminus, the 447-residue chain is 3-O-methyltransferase 2 (447 aa).

S-adenosyl-L-methionine contacts are provided by residues 264 to 265 (GG), D287, 318 to 319 (DF), and R334. The active-site Proton acceptor is the H338.

The protein belongs to the class I-like SAM-binding methyltransferase superfamily. Cation-independent O-methyltransferase family. COMT subfamily.

S-adenosyl-L-methionine-dependent methyltransferase that preferentially catalyzes the methylation of 3-OH phenolic compounds like isovanillic acid and 3-OH-4-Met cinnamic acid. May play a role in promoting lignin degradation by methylating and inactivating free-hydroxyl phenolic compounds, products of lignin cleavage which are known inhibitors of lignin peroxidases. This chain is 3-O-methyltransferase 2, found in Phanerochaete chrysosporium (strain RP-78 / ATCC MYA-4764 / FGSC 9002) (White-rot fungus).